We begin with the raw amino-acid sequence, 1393 residues long: ABC transporter G family member 3 (1393 aa).

The span at 1-14 (MEDKNNIELQEKAP) shows a compositional bias: basic and acidic residues. The interval 1–68 (MEDKNNIELQ…IIYQNPTPAS (68 aa)) is disordered. The segment covering 15–50 (DNYNNNNNNNNNNNNNNNNNNNNNNNNNNNNNNDIN) has biased composition (low complexity). In terms of domain architecture, ABC transporter 1 spans 100 to 353 (VSANNISYYI…YFSSIGLAPL (254 aa)). ATP is bound at residue 144–151 (GIPGAGKS). The ABC transmembrane type-2 1 domain maps to 473–698 (MQYAVRFFQA…SYADGGYQGN (226 aa)). 7 helical membrane passes run 479-499 (FFQA…MGFT), 509-529 (LVYF…EEFF), 558-578 (IPIS…IAGF), 585-605 (FIVF…IFQV), 615-635 (LASL…GYMI), 640-660 (IPGW…IDMV), and 724-744 (VDIV…FLGV). Residues 783 to 1035 (MTFQNLNYVV…VIQHFTSAGY (253 aa)) form the ABC transporter 2 domain. An ATP-binding site is contributed by 828 to 835 (GPSGAGKS). One can recognise an ABC transmembrane type-2 2 domain in the interval 1121 to 1388 (QTILLRFLRS…FLGYLALRFI (268 aa)). The next 6 membrane-spanning stretches (helical) occupy residues 1122–1142 (TILL…TLFL), 1157–1177 (LVFL…PTIV), 1206–1226 (LPMM…LTGL), 1235–1255 (FFFS…LATL), 1265–1285 (IAIL…GFFI), and 1364–1384 (FYNL…GYLA).

Belongs to the ABC transporter superfamily. ABCG family. PDR (TC 3.A.1.205) subfamily.

It localises to the membrane. The chain is ABC transporter G family member 3 (abcG3) from Dictyostelium discoideum (Social amoeba).